A 152-amino-acid chain; its full sequence is Superoxide dismutase [Cu-Zn] (152 aa).

Positions 45, 47, and 62 each coordinate Cu cation. Cysteine 56 and cysteine 145 are oxidised to a cystine. Zn(2+) is bound by residues histidine 62, histidine 70, histidine 79, and aspartate 82. Histidine 119 is a Cu cation binding site.

It belongs to the Cu-Zn superoxide dismutase family. Homodimer. Cu cation is required as a cofactor. It depends on Zn(2+) as a cofactor.

Its subcellular location is the cytoplasm. It catalyses the reaction 2 superoxide + 2 H(+) = H2O2 + O2. In terms of biological role, destroys radicals which are normally produced within the cells and which are toxic to biological systems. The protein is Superoxide dismutase [Cu-Zn] (SODCC) of Spinacia oleracea (Spinach).